The sequence spans 494 residues: Glycosyl hydrolase family 109 protein (494 aa).

Disordered stretches follow at residues 1 to 35 (MNDA…LRTT) and 59 to 86 (EAAQ…MAGV). A signal peptide (tat-type signal) is located at residues 1–55 (MNDAAPQNPGQDEAKGTGEKDNGGSMSPRSALRTTAGVAGAGLGLSALGTGTASA). The segment covering 12-22 (DEAKGTGEKDN) has biased composition (basic and acidic residues). NAD(+) is bound by residues 103–104 (NR), aspartate 125, 174–177 (WDFH), 194–195 (EC), and asparagine 223. Substrate contacts are provided by residues tyrosine 252, arginine 271, 283-286 (YPNH), and tyrosine 365. Tyrosine 283 contributes to the NAD(+) binding site. Residues 463–494 (KANGKPQQIPDFTRGEWKKSRPGTDSEKPSEP) form a disordered region. A compositionally biased stretch (basic and acidic residues) spans 475–494 (TRGEWKKSRPGTDSEKPSEP).

It belongs to the Gfo/Idh/MocA family. Glycosyl hydrolase 109 subfamily. NAD(+) serves as cofactor. Predicted to be exported by the Tat system. The position of the signal peptide cleavage has not been experimentally proven.

In terms of biological role, glycosidase. This Streptomyces niveus (Streptomyces spheroides) protein is Glycosyl hydrolase family 109 protein.